We begin with the raw amino-acid sequence, 547 residues long: uncharacterized protein (547 aa).

The Extracellular portion of the chain corresponds to 1-21 (MVKKHQNSKMGNTNHFGHLKS). Residues 22–42 (FVGGNVVALGAGTPYLFSFYA) form a helical membrane-spanning segment. Residues 43–58 (PQLLSKCHIPVSASSK) lie on the Cytoplasmic side of the membrane. Residues 59 to 79 (LSFSLTIGSSLMGILAGIVVD) form a helical membrane-spanning segment. Topologically, residues 80 to 83 (RSPK) are extracellular. Residues 84–104 (LSCLIGSMCVFIAYLILNLCY) traverse the membrane as a helical segment. Residues 105–110 (KHEWSS) lie on the Cytoplasmic side of the membrane. The chain crosses the membrane as a helical span at residues 111–131 (TFLISLSLVLIGYGSVSGFYA). Residues 132–144 (SVKCANTNFPQHR) are Extracellular-facing. The chain crosses the membrane as a helical span at residues 145-165 (GTAGAFPVSLYGLSGMVFSYL). Over 166-175 (CSKLFGENIE) the chain is Cytoplasmic. Residues 176-196 (HVFIFLMVACGCMILVGYFSL) form a helical membrane-spanning segment. Residues 197-323 (DIFSNAEGDD…LKSSTFIGYY (127 aa)) lie on the Extracellular side of the membrane. Ser237 carries the post-translational modification Phosphoserine. The disordered stretch occupies residues 275–300 (LLSPSSPHTKYDFEDENTSKNTVGEN). A helical membrane pass occupies residues 324–344 (IVLGILQGVGLMYIYSVGFMV). The Cytoplasmic portion of the chain corresponds to 345–398 (QAQVSTPPLNQLPINAEKIQSLQVTLLSLLSFCGRLSSGPISDFLVKKFKAQRL). The chain crosses the membrane as a helical span at residues 399-419 (WNIVIASLLVFLASNKISHDF). At 420–437 (SSIEDPSLRASKSFKNIS) the chain is on the extracellular side. Residues 438–458 (VCSAIFGYSFGVLFGTFPSIV) form a helical membrane-spanning segment. The Cytoplasmic segment spans residues 459–469 (ADRFGTNGYST). A helical membrane pass occupies residues 470–490 (LWGVLTTGGVFSVSVFTDILG). Over 491-514 (RDFKANTGDDDGNCKKGVLCYSYT) the chain is Extracellular. Residues 515–535 (FMVTKYCAAFNLLFVLGIIGY) traverse the membrane as a helical segment. Residues 536–547 (TYYRRRATANSL) lie on the Cytoplasmic side of the membrane.

It localises to the membrane. This is an uncharacterized protein from Saccharomyces cerevisiae (strain ATCC 204508 / S288c) (Baker's yeast).